Consider the following 443-residue polypeptide: Tubulin beta chain (443 aa).

Positions 11, 69, 138, 142, 143, 144, 204, and 226 each coordinate GTP. Glu-69 contacts Mg(2+). The interval 424–443 (QYQDASAEEEGEFEGEEEEA) is disordered. Acidic residues predominate over residues 429-443 (SAEEEGEFEGEEEEA).

The protein belongs to the tubulin family. Dimer of alpha and beta chains. A typical microtubule is a hollow water-filled tube with an outer diameter of 25 nm and an inner diameter of 15 nM. Alpha-beta heterodimers associate head-to-tail to form protofilaments running lengthwise along the microtubule wall with the beta-tubulin subunit facing the microtubule plus end conferring a structural polarity. Microtubules usually have 13 protofilaments but different protofilament numbers can be found in some organisms and specialized cells. The cofactor is Mg(2+).

The protein resides in the cytoplasm. Its subcellular location is the cytoskeleton. In terms of biological role, tubulin is the major constituent of microtubules, a cylinder consisting of laterally associated linear protofilaments composed of alpha- and beta-tubulin heterodimers. Microtubules grow by the addition of GTP-tubulin dimers to the microtubule end, where a stabilizing cap forms. Below the cap, tubulin dimers are in GDP-bound state, owing to GTPase activity of alpha-tubulin. The protein is Tubulin beta chain (TUBB) of Chlamydomonas incerta.